Here is a 733-residue protein sequence, read N- to C-terminus: FYVE, RhoGEF and PH domain-containing protein 3 (733 aa).

Polar residues-rich tracts occupy residues 1 to 11, 47 to 60, and 106 to 117; these read MELGRSSSTPQ, HSSS…STRE, and ETASDSRVPQDN. Positions 1 to 134 are disordered; the sequence is MELGRSSSTP…GVGEEPDPKV (134 aa). Acidic residues predominate over residues 118–129; that stretch reads PQEEEDSGVGEE. Ser-124 carries the phosphoserine modification. The region spanning 153–337 is the DH domain; it reads KLLHIAQELL…STAADHSNAA (185 aa). Residues 366–465 enclose the PH 1 domain; that stretch reads ELIKEGSIQK…WIQVIQATVE (100 aa). The segment at 481 to 535 is disordered; the sequence is CSQDEEPTLSPDQPVMSTSSVEPAGVADSNGGTPGIESRKSSSKTRRDKEKPGCK. Over residues 517-533 the composition is skewed to basic and acidic residues; sequence ESRKSSSKTRRDKEKPG. The FYVE-type zinc finger occupies 528–584; that stretch reads DKEKPGCKSCGETFNSITKRRYRCKLCGEVICRKCSEFKAENSKQSRVCRECFLEEP. Cys-534, Cys-537, Cys-551, Cys-554, Cys-559, Cys-562, Cys-576, and Cys-579 together coordinate Zn(2+). 2 disordered regions span residues 586–612 and 712–733; these read VPPS…DPRP and GDTA…TDTP. Positions 612–711 constitute a PH 2 domain; sequence PSLLCGTLNL…WLKALGTAVH (100 aa). Residue Thr-732 is modified to Phosphothreonine.

Detected in adult brain, spleen, lung and skeletal muscle. Detected in embryos from 7 dpc to 17 dpc.

Its subcellular location is the cytoplasm. The protein resides in the cytoskeleton. In terms of biological role, promotes the formation of filopodia. May activate CDC42, a member of the Ras-like family of Rho- and Rac proteins, by exchanging bound GDP for free GTP. Plays a role in regulating the actin cytoskeleton and cell shape. This chain is FYVE, RhoGEF and PH domain-containing protein 3 (Fgd3), found in Mus musculus (Mouse).